The following is a 346-amino-acid chain: UDP-N-acetylenolpyruvoylglucosamine reductase (346 aa).

In terms of domain architecture, FAD-binding PCMH-type spans 22–194 (GFDVRARFAC…TSVTFRLPKV (173 aa)). Residue R170 is part of the active site. S246 functions as the Proton donor in the catalytic mechanism. Residue E342 is part of the active site.

This sequence belongs to the MurB family. Requires FAD as cofactor.

Its subcellular location is the cytoplasm. It catalyses the reaction UDP-N-acetyl-alpha-D-muramate + NADP(+) = UDP-N-acetyl-3-O-(1-carboxyvinyl)-alpha-D-glucosamine + NADPH + H(+). Its pathway is cell wall biogenesis; peptidoglycan biosynthesis. In terms of biological role, cell wall formation. The chain is UDP-N-acetylenolpyruvoylglucosamine reductase from Paraburkholderia xenovorans (strain LB400).